The sequence spans 720 residues: NADH-ubiquinone oxidoreductase 78 kDa subunit, mitochondrial (720 aa).

The N-terminal 23 residues, 1–23 (MNSIKSHILRSSKRYISASSKRL), are a transit peptide targeting the mitochondrion. In terms of domain architecture, 2Fe-2S ferredoxin-type spans 24–102 (AEVEVTVDGR…GMVVHTDSER (79 aa)). 4 residues coordinate [2Fe-2S] cluster: cysteine 58, cysteine 69, cysteine 72, and cysteine 86. In terms of domain architecture, 4Fe-4S His(Cys)3-ligated-type spans 102-141 (RIKKAREGVTEMLLENHPLDCPVCDQGGECDLQEQSQRYG). Residues 241-297 (LKRTETIDVLDAVGSNIRVDTRGIEVMRVLPRLNDDVNEEWISDKTRFACDGLKTQR) enclose the 4Fe-4S Mo/W bis-MGD-type domain.

This sequence belongs to the complex I 75 kDa subunit family. In terms of assembly, core subunit of respiratory chain NADH dehydrogenase (Complex I) which is composed of 45 different subunits. This is the largest subunit of complex I and it is a component of the iron-sulfur (IP) fragment of the enzyme. Requires [2Fe-2S] cluster as cofactor. The cofactor is [4Fe-4S] cluster.

Its subcellular location is the mitochondrion. The enzyme catalyses a ubiquinone + NADH + 5 H(+)(in) = a ubiquinol + NAD(+) + 4 H(+)(out). Functionally, core subunit of the mitochondrial membrane respiratory chain NADH dehydrogenase (Complex I) which catalyzes electron transfer from NADH through the respiratory chain, using ubiquinone as an electron acceptor. Essential for catalysing the entry and efficient transfer of electrons within complex I. Plays a key role in the assembly and stability of complex I and participates in the association of complex I with ubiquinol-cytochrome reductase complex (Complex III) to form supercomplexes. Plays a role in cell wall integrity and is involved in osmotic and oxidative resistance, yeast to hypha transition, and the ability to damage and invade oral epithelial cells. This is NADH-ubiquinone oxidoreductase 78 kDa subunit, mitochondrial from Candida albicans (strain SC5314 / ATCC MYA-2876) (Yeast).